A 325-amino-acid chain; its full sequence is MNFWYSRSKIAYLLLPFSLLFWLISTIRRFLFQSGILSAYKAPVPVIVVGNLSVGGNGKTPVVIWLVQQLQMRGLNCGVISRGYGSQSEVYPLLVNAETDPVRGGDEPVLIAKRAGVPVCISPNRQQAIELLLSSYPCDVIVSDDGLQHYKLQRDIEIVVMDAVRGLGNGWVLPAGPLRELPSRLADADFIIGNGGENVYTDTAMRLVPHYAINLVTNEKRELNAFEQAIAIAGIGNPDRFFKMLQDEGIRLVSSQAFQDHQKFSADLFARFAPNVPLLMTEKDAVKCGRFAQQNWWYVPVDAEITGEKSAALLDKIEQMTQQGK.

An ATP-binding site is contributed by 53 to 60; it reads SVGGNGKT.

The protein belongs to the LpxK family.

It catalyses the reaction a lipid A disaccharide + ATP = a lipid IVA + ADP + H(+). Its pathway is glycolipid biosynthesis; lipid IV(A) biosynthesis; lipid IV(A) from (3R)-3-hydroxytetradecanoyl-[acyl-carrier-protein] and UDP-N-acetyl-alpha-D-glucosamine: step 6/6. Transfers the gamma-phosphate of ATP to the 4'-position of a tetraacyldisaccharide 1-phosphate intermediate (termed DS-1-P) to form tetraacyldisaccharide 1,4'-bis-phosphate (lipid IVA). The polypeptide is Tetraacyldisaccharide 4'-kinase (Actinobacillus succinogenes (strain ATCC 55618 / DSM 22257 / CCUG 43843 / 130Z)).